Consider the following 225-residue polypeptide: Pre-mRNA-splicing factor SPF27 (225 aa).

Residues 138-222 (SNDNLALMIE…QGDENKENIR (85 aa)) are a coiled coil.

The protein belongs to the SPF27 family. Component of the pre-catalytic and catalytic spliceosome complexes. Component of the postcatalytic spliceosome P complex.

It is found in the nucleus. Functionally, required for pre-mRNA splicing as component of the activated spliceosome. May have a scaffolding role in the spliceosome assembly as it contacts all other components of the core complex. This Danio rerio (Zebrafish) protein is Pre-mRNA-splicing factor SPF27 (bcas2).